Consider the following 959-residue polypeptide: DNA polymerase 1 (959 aa).

The segment at 1–110 (MRVRGGQEAA…LTLEPSPQSE (110 aa)) is disordered. The segment covering 44–60 (KKPEPPPTLHREREPES) has biased composition (basic and acidic residues).

It belongs to the DNA polymerase type-B family.

The catalysed reaction is DNA(n) + a 2'-deoxyribonucleoside 5'-triphosphate = DNA(n+1) + diphosphate. This chain is DNA polymerase 1 (polA), found in Aeropyrum pernix (strain ATCC 700893 / DSM 11879 / JCM 9820 / NBRC 100138 / K1).